Consider the following 1179-residue polypeptide: DNA-directed RNA polymerase subunit beta (1179 aa).

Over residues 1153 to 1162 the composition is skewed to acidic residues; the sequence is MREMEDEDEG. Residues 1153-1179 are disordered; the sequence is MREMEDEDEGNGEKLNLVLEGGSLNEE.

The protein belongs to the RNA polymerase beta chain family. The RNAP catalytic core consists of 2 alpha, 1 beta, 1 beta' and 1 omega subunit. When a sigma factor is associated with the core the holoenzyme is formed, which can initiate transcription.

The catalysed reaction is RNA(n) + a ribonucleoside 5'-triphosphate = RNA(n+1) + diphosphate. Functionally, DNA-dependent RNA polymerase catalyzes the transcription of DNA into RNA using the four ribonucleoside triphosphates as substrates. In Brevibacillus brevis (strain 47 / JCM 6285 / NBRC 100599), this protein is DNA-directed RNA polymerase subunit beta.